Here is a 528-residue protein sequence, read N- to C-terminus: MDLSVENGGLAPGFRFHPTDEELVVYYLKRKIRRKKLRVEAIGETDVYKFDPEELPEKALYKTRDRQWFFFSLRDRKHGSRSSRATERGYWKATGKDRVIHCDSRPVGEKKTLVFHRGRAPNGERTNWVMHEYTLHKEELKRCGGEDVKDAYVLYKIYKKSGSGPKNGEQYGAPFIEEEWAEDDDDDVDEPANQLVVSASVDNSLWGKGLNQSELDDNDIEELMSQVRDQSGPTLQQNGVSGLNSHVDTYNLENLEEDMYLEINDLMEPEPEPTSVEVMENNWNEDGSGLLNDDDFVGADSYFLDLGVTNPQLDFVSGDLKNGFAQSLQVNTSLMTYQANNNQFQQQSGKNQASNWPLRNSYTRQINNGSSWVQELNNDGLTVTRFGEAPGTGDSSEFLNPVPSGISTTNEDDPSKDESSKFASSVWTFLESIPAKPAYASENPFVKLNLVRMSTSGGRFRFTSKSTGNNVVVMDSDSAVKRNKSGGNNDKKKKKNKGFFCLSIIGALCALFWVIIGTMGGSGRPLLW.

One can recognise an NAC domain in the interval 10–160 (LAPGFRFHPT…AYVLYKIYKK (151 aa)). Residues 107–166 (VGEKKTLVFHRGRAPNGERTNWVMHEYTLHKEELKRCGGEDVKDAYVLYKIYKKSGSGPK) mediate DNA binding. The segment at 388-419 (EAPGTGDSSEFLNPVPSGISTTNEDDPSKDES) is disordered. Residues 499–519 (FFCLSIIGALCALFWVIIGTM) form a helical membrane-spanning segment.

As to quaternary structure, interacts with RCD1. As to expression, expressed in roots, rosette leaves, shoot apex, stems and flowers.

The protein localises to the endoplasmic reticulum membrane. Its subcellular location is the nucleus. Transcriptional activator activated by proteolytic cleavage through regulated intramembrane proteolysis (RIP). Involved in oxidative stress tolerance by mediating regulation of mitochondrial retrograde signaling during mitochondrial dysfunction. Interacts directly with the mitochondrial dysfunction DNA consensus motif 5'-CTTGNNNNNCA[AC]G-3', a cis-regulatory elements of several mitochondrial retrograde regulation-induced genes, and triggers increased oxidative stress tolerance. This Arabidopsis thaliana (Mouse-ear cress) protein is NAC domain-containing protein 13.